Reading from the N-terminus, the 350-residue chain is DNA repair protein rhp55 (350 aa).

51 to 58 (GAPGMGKT) serves as a coordination point for ATP. The tract at residues 331-350 (QSIPTNSSQRRKRSILECES) is disordered.

It belongs to the RecA family. RAD55 subfamily.

Its subcellular location is the nucleus. Functionally, required for radiation resistance and meiotic viability and acts in recombination and recombinational DNA repair pathways. In Schizosaccharomyces pombe (strain 972 / ATCC 24843) (Fission yeast), this protein is DNA repair protein rhp55 (rhp55).